We begin with the raw amino-acid sequence, 232 residues long: ATP phosphoribosyltransferase (232 aa).

Belongs to the ATP phosphoribosyltransferase family. Short subfamily. In terms of assembly, heteromultimer composed of HisG and HisZ subunits.

It localises to the cytoplasm. The catalysed reaction is 1-(5-phospho-beta-D-ribosyl)-ATP + diphosphate = 5-phospho-alpha-D-ribose 1-diphosphate + ATP. It functions in the pathway amino-acid biosynthesis; L-histidine biosynthesis; L-histidine from 5-phospho-alpha-D-ribose 1-diphosphate: step 1/9. In terms of biological role, catalyzes the condensation of ATP and 5-phosphoribose 1-diphosphate to form N'-(5'-phosphoribosyl)-ATP (PR-ATP). Has a crucial role in the pathway because the rate of histidine biosynthesis seems to be controlled primarily by regulation of HisG enzymatic activity. This Mesorhizobium japonicum (strain LMG 29417 / CECT 9101 / MAFF 303099) (Mesorhizobium loti (strain MAFF 303099)) protein is ATP phosphoribosyltransferase (hisG).